The following is a 339-amino-acid chain: D-erythrose-4-phosphate dehydrogenase (339 aa).

11-12 (RI) serves as a coordination point for NAD(+). Residues 153–155 (SCT), R199, 212–213 (TK), and R235 each bind substrate. C154 (nucleophile) is an active-site residue. Residue N317 participates in NAD(+) binding.

Belongs to the glyceraldehyde-3-phosphate dehydrogenase family. Epd subfamily. Homotetramer.

The protein resides in the cytoplasm. It catalyses the reaction D-erythrose 4-phosphate + NAD(+) + H2O = 4-phospho-D-erythronate + NADH + 2 H(+). It participates in cofactor biosynthesis; pyridoxine 5'-phosphate biosynthesis; pyridoxine 5'-phosphate from D-erythrose 4-phosphate: step 1/5. Its function is as follows. Catalyzes the NAD-dependent conversion of D-erythrose 4-phosphate to 4-phosphoerythronate. This chain is D-erythrose-4-phosphate dehydrogenase, found in Shewanella halifaxensis (strain HAW-EB4).